Reading from the N-terminus, the 104-residue chain is MSTQFDQVSVIKKANIYFDGKCVSHSVLFADGTKKTIGVIFPSTLKFNTGAAEIMELNAGKCRIRLAGATDWETYEGGQQFNVPANSSFDIETIDTLDYVCHFV.

The protein belongs to the nucleoside phosphorylase PpnP family.

It catalyses the reaction a purine D-ribonucleoside + phosphate = a purine nucleobase + alpha-D-ribose 1-phosphate. The catalysed reaction is adenosine + phosphate = alpha-D-ribose 1-phosphate + adenine. It carries out the reaction cytidine + phosphate = cytosine + alpha-D-ribose 1-phosphate. The enzyme catalyses guanosine + phosphate = alpha-D-ribose 1-phosphate + guanine. It catalyses the reaction inosine + phosphate = alpha-D-ribose 1-phosphate + hypoxanthine. The catalysed reaction is thymidine + phosphate = 2-deoxy-alpha-D-ribose 1-phosphate + thymine. It carries out the reaction uridine + phosphate = alpha-D-ribose 1-phosphate + uracil. The enzyme catalyses xanthosine + phosphate = alpha-D-ribose 1-phosphate + xanthine. In terms of biological role, catalyzes the phosphorolysis of diverse nucleosides, yielding D-ribose 1-phosphate and the respective free bases. Can use uridine, adenosine, guanosine, cytidine, thymidine, inosine and xanthosine as substrates. Also catalyzes the reverse reactions. The sequence is that of Pyrimidine/purine nucleoside phosphorylase from Janthinobacterium sp. (strain Marseille) (Minibacterium massiliensis).